A 157-amino-acid polypeptide reads, in one-letter code: 2-C-methyl-D-erythritol 2,4-cyclodiphosphate synthase (157 aa).

The a divalent metal cation site is built by Asp-8 and His-10. 4-CDP-2-C-methyl-D-erythritol 2-phosphate-binding positions include 8–10 (DVH) and 34–35 (HS). Position 42 (His-42) interacts with a divalent metal cation. 4-CDP-2-C-methyl-D-erythritol 2-phosphate is bound by residues 56-58 (DIG), 61-65 (FPDTD), 100-106 (AQAPKMA), 132-135 (TTTE), Phe-139, and Arg-142.

This sequence belongs to the IspF family. As to quaternary structure, homotrimer. It depends on a divalent metal cation as a cofactor.

The enzyme catalyses 4-CDP-2-C-methyl-D-erythritol 2-phosphate = 2-C-methyl-D-erythritol 2,4-cyclic diphosphate + CMP. The protein operates within isoprenoid biosynthesis; isopentenyl diphosphate biosynthesis via DXP pathway; isopentenyl diphosphate from 1-deoxy-D-xylulose 5-phosphate: step 4/6. Its function is as follows. Involved in the biosynthesis of isopentenyl diphosphate (IPP) and dimethylallyl diphosphate (DMAPP), two major building blocks of isoprenoid compounds. Catalyzes the conversion of 4-diphosphocytidyl-2-C-methyl-D-erythritol 2-phosphate (CDP-ME2P) to 2-C-methyl-D-erythritol 2,4-cyclodiphosphate (ME-CPP) with a corresponding release of cytidine 5-monophosphate (CMP). This is 2-C-methyl-D-erythritol 2,4-cyclodiphosphate synthase from Serratia proteamaculans (strain 568).